We begin with the raw amino-acid sequence, 203 residues long: ATP-dependent Clp protease proteolytic subunit (203 aa).

S107 (nucleophile) is an active-site residue. H132 is a catalytic residue.

This sequence belongs to the peptidase S14 family. Fourteen ClpP subunits assemble into 2 heptameric rings which stack back to back to give a disk-like structure with a central cavity, resembling the structure of eukaryotic proteasomes.

The protein localises to the cytoplasm. The catalysed reaction is Hydrolysis of proteins to small peptides in the presence of ATP and magnesium. alpha-casein is the usual test substrate. In the absence of ATP, only oligopeptides shorter than five residues are hydrolyzed (such as succinyl-Leu-Tyr-|-NHMec, and Leu-Tyr-Leu-|-Tyr-Trp, in which cleavage of the -Tyr-|-Leu- and -Tyr-|-Trp bonds also occurs).. Functionally, cleaves peptides in various proteins in a process that requires ATP hydrolysis. Has a chymotrypsin-like activity. Plays a major role in the degradation of misfolded proteins. The protein is ATP-dependent Clp protease proteolytic subunit of Shewanella halifaxensis (strain HAW-EB4).